The sequence spans 555 residues: Acetyl-coenzyme A thioesterase (555 aa).

Residues Ala5–Gly117 enclose the HotDog ACOT-type 1 domain. Lys33 carries the N6-succinyllysine modification. CoA-binding positions include Thr53–Ser55, Ser82–Ser84, and Arg144. N6-succinyllysine is present on residues Lys159 and Lys228. One can recognise a HotDog ACOT-type 2 domain in the interval Arg179–Lys294. Lys234–Arg236 is a CoA binding site. The 210-residue stretch at Cys340–Asp549 folds into the START domain.

Homodimer or homotetramer.

Its subcellular location is the cytoplasm. It is found in the cytosol. The catalysed reaction is acetyl-CoA + H2O = acetate + CoA + H(+). It catalyses the reaction butanoyl-CoA + H2O = butanoate + CoA + H(+). It carries out the reaction hexanoyl-CoA + H2O = hexanoate + CoA + H(+). It functions in the pathway lipid metabolism; fatty acid metabolism. Inhibited by ADP. Active in the presence of ATP. Cold labile, it dissociates into inactive monomers at low temperature. Catalyzes the hydrolysis of acyl-CoAs into free fatty acids and coenzyme A (CoASH), regulating their respective intracellular levels. Preferentially hydrolyzes acetyl-CoA. This Homo sapiens (Human) protein is Acetyl-coenzyme A thioesterase (ACOT12).